The primary structure comprises 488 residues: Glutamyl-tRNA(Gln) amidotransferase subunit A (488 aa).

Residues lysine 77 and serine 152 each act as charge relay system in the active site. Residue serine 176 is the Acyl-ester intermediate of the active site.

The protein belongs to the amidase family. GatA subfamily. As to quaternary structure, heterotrimer of A, B and C subunits.

It catalyses the reaction L-glutamyl-tRNA(Gln) + L-glutamine + ATP + H2O = L-glutaminyl-tRNA(Gln) + L-glutamate + ADP + phosphate + H(+). Functionally, allows the formation of correctly charged Gln-tRNA(Gln) through the transamidation of misacylated Glu-tRNA(Gln) in organisms which lack glutaminyl-tRNA synthetase. The reaction takes place in the presence of glutamine and ATP through an activated gamma-phospho-Glu-tRNA(Gln). The polypeptide is Glutamyl-tRNA(Gln) amidotransferase subunit A (Streptococcus thermophilus (strain CNRZ 1066)).